Here is a 790-residue protein sequence, read N- to C-terminus: SH3 domain-containing protein 19 (790 aa).

Disordered stretches follow at residues 21–196 (EGQT…PVLQ) and 241–374 (EPIK…MDLQ). Residue Ser65 is modified to Phosphoserine. The segment covering 287–296 (NTFSTVSGKL) has biased composition (polar residues). A compositionally biased stretch (pro residues) spans 336–351 (QQPPTKVPPERPPPPK). Residues 342 to 358 (VPPERPPPPKLSATRRS) form an interaction with SH3GL1 region. Positions 365 to 374 (NRSSSDMDLQ) are enriched in polar residues. Phosphoserine is present on Ser369. 5 SH3 domains span residues 415-477 (LSVP…PLDE), 495-554 (SGAP…VIID), 571-630 (VKGS…PVED), 661-720 (LPAE…PCPA), and 730-789 (PKGR…FLQI). Ser762 is subject to Phosphoserine.

As to quaternary structure, interacts with ADAM12. Isoform 4 and isoform 5 (but not isoform 1 and isoform 2) interact with ADAM9, ADAM10, ADAM15 and ADAM17. Interacts with SH3GL1 SH3 domain. Interacts via SH3 3 and SH3 4 or SH3 4 and SH3 5 domains with SOS2. Probably forms a trimeric complex with SH3GL1 and SOS2. Interacts with SH3YL1. As to expression, widely expressed with highest levels in heart, skeletal muscle, kidney, liver, placenta, small intestine and lung. Expressed at low levels in colon, thymus, spleen and leukocytes.

It localises to the cytoplasm. It is found in the nucleus. Its function is as follows. May play a role in regulating A disintegrin and metalloproteases (ADAMs) in the signaling of EGFR-ligand shedding. May be involved in suppression of Ras-induced cellular transformation and Ras-mediated activation of ELK1. Plays a role in the regulation of cell morphology and cytoskeletal organization. This Homo sapiens (Human) protein is SH3 domain-containing protein 19 (SH3D19).